The primary structure comprises 289 residues: Homoserine kinase (289 aa).

79–89 is a binding site for ATP; the sequence is PLARGLGSSSS.

It belongs to the GHMP kinase family. Homoserine kinase subfamily.

It localises to the cytoplasm. It catalyses the reaction L-homoserine + ATP = O-phospho-L-homoserine + ADP + H(+). Its pathway is amino-acid biosynthesis; L-threonine biosynthesis; L-threonine from L-aspartate: step 4/5. Catalyzes the ATP-dependent phosphorylation of L-homoserine to L-homoserine phosphate. The polypeptide is Homoserine kinase (Streptococcus pneumoniae (strain Taiwan19F-14)).